Consider the following 532-residue polypeptide: UDP-glucuronosyltransferase 1A6 (532 aa).

An N-terminal signal peptide occupies residues 1–26; sequence MACLLRSFQRISAGVFFLALWGMVVG. N-linked (GlcNAc...) asparagine glycosylation is found at Asn294 and Asn346. Residues 490–506 traverse the membrane as a helical segment; the sequence is VIGFLLAVVLTVAFITF.

The protein belongs to the UDP-glycosyltransferase family. Isoform 1 interacts with isoform 3/i2 suggesting that oligomerization is involved in negative regulation of transferase activity by isoform 3. Isoform 1 also interacts with respective i2 isoforms of UGT1A1, UGT1A3, UGT1A4, UGT1A7, UGT1A8, UGT1A9 and UGT1A10. Expressed in skin. Isoforms 1 and 3 are expressed in kidney and liver. Isoform 1 but not isoform 2 is expressed in colon, esophagus and small intestine.

It localises to the microsome. Its subcellular location is the endoplasmic reticulum membrane. The enzyme catalyses glucuronate acceptor + UDP-alpha-D-glucuronate = acceptor beta-D-glucuronoside + UDP + H(+). It carries out the reaction (5Z,8Z,11Z,14Z)-eicosatetraenoate + UDP-alpha-D-glucuronate = O-[(5Z),(8Z),(11Z),(14Z)-eicosatetraenoyl]-beta-D-glucuronate + UDP. It catalyses the reaction 15-hydroxy-(5Z,8Z,11Z,13E)-eicosatetraenoate + UDP-alpha-D-glucuronate = 15-O-(beta-D-glucuronosyl)-(5Z,8Z,11Z,14Z)-eicosatetraenoate + UDP + H(+). The catalysed reaction is (E)-ferulate + UDP-alpha-D-glucuronate = (E)-4-O-(beta-D-glucuronosyl)-ferulate + UDP + H(+). The enzyme catalyses (E)-ferulate + UDP-alpha-D-glucuronate = (E)-ferulic acid beta-D-glucuronate ester + UDP. In terms of biological role, UDP-glucuronosyltransferase (UGT) that catalyzes phase II biotransformation reactions in which lipophilic substrates are conjugated with glucuronic acid to facilitate their inactivation and excretion from the body. Essential for the elimination and detoxification of drugs, xenobiotics and endogenous compounds. Involved in the glucuronidation of arachidonic acid (AA) and AA-derived eicosanoids including 15-HETE and 20-HETE. Conjugates small planar phenolic molecules such as 4-nitrophenol, 1-naphthol, and 4-methylumbelliferone. The bulky phenol 4-hydroxybiphenyl, androgens and estrogens are not substrates. 2-hydroxybiphenyl is an excellent substrate. Involved in the glucuronidation of the phytochemical ferulic acid at the phenolic or the carboxylic acid group. Functionally, isoform 3 lacks transferase activity but acts as a negative regulator of isoform 1. The chain is UDP-glucuronosyltransferase 1A6 from Homo sapiens (Human).